The sequence spans 320 residues: Lipoyl synthase (320 aa).

Residues 1-29 (MVTVVDRVTNRRLRHPEKAHRPDTSVQKK) are disordered. Residues 19–29 (AHRPDTSVQKK) are compositionally biased toward basic and acidic residues. [4Fe-4S] cluster contacts are provided by Cys59, Cys64, Cys70, Cys85, Cys89, Cys92, and Ser298. Residues 71–287 (WSQRHASFMI…AKIGKVKGFL (217 aa)) form the Radical SAM core domain.

The protein belongs to the radical SAM superfamily. Lipoyl synthase family. [4Fe-4S] cluster serves as cofactor.

It is found in the cytoplasm. It carries out the reaction [[Fe-S] cluster scaffold protein carrying a second [4Fe-4S](2+) cluster] + N(6)-octanoyl-L-lysyl-[protein] + 2 oxidized [2Fe-2S]-[ferredoxin] + 2 S-adenosyl-L-methionine + 4 H(+) = [[Fe-S] cluster scaffold protein] + N(6)-[(R)-dihydrolipoyl]-L-lysyl-[protein] + 4 Fe(3+) + 2 hydrogen sulfide + 2 5'-deoxyadenosine + 2 L-methionine + 2 reduced [2Fe-2S]-[ferredoxin]. The protein operates within protein modification; protein lipoylation via endogenous pathway; protein N(6)-(lipoyl)lysine from octanoyl-[acyl-carrier-protein]: step 2/2. In terms of biological role, catalyzes the radical-mediated insertion of two sulfur atoms into the C-6 and C-8 positions of the octanoyl moiety bound to the lipoyl domains of lipoate-dependent enzymes, thereby converting the octanoylated domains into lipoylated derivatives. This chain is Lipoyl synthase, found in Bartonella tribocorum (strain CIP 105476 / IBS 506).